Here is a 473-residue protein sequence, read N- to C-terminus: Vasculin (473 aa).

Disordered stretches follow at residues 1–25 (MAQHDFAPAWLNFPTPPSSTKSSLN), 45–169 (RRHN…KSRA), and 191–342 (VGNL…QERD). Position 49 is a phosphoserine (Ser49). At Arg87 the chain carries Omega-N-methylarginine. Low complexity predominate over residues 93-107 (GSSRSRSSIFHSGKS). The span at 119-133 (ETGRKEDKRERKQFE) shows a compositional bias: basic and acidic residues. Polar residues-rich tracts occupy residues 194 to 204 (LPSQPVKNGTG) and 251 to 286 (AFKSTAKNFSPSTNSVKECNRSNSSSPVDKLNQQPR). Residues Ser274, Ser276, Ser322, and Ser381 each carry the phosphoserine modification. A compositionally biased stretch (basic and acidic residues) spans 293-329 (MRTDKKSEFLKALKRDRVEEEHEDESRAGSEKDDDSF). The interval 444–473 (GPWKNSTFKPTTENDDTETSSSDTSDDDDV) is disordered. A compositionally biased stretch (acidic residues) spans 456–473 (ENDDTETSSSDTSDDDDV).

Belongs to the vasculin family. As to quaternary structure, interacts with GTF2B, GTF2F2, RNA polymerase II and TBP.

It localises to the nucleus. Functionally, functions as a GC-rich promoter-specific transactivating transcription factor. This chain is Vasculin (GPBP1), found in Pongo abelii (Sumatran orangutan).